The sequence spans 514 residues: Monocarboxylate transporter 10 (514 aa).

Positions 1–64 (MVPSQEEPAA…TGNQEPPEPP (64 aa)) are disordered. The Cytoplasmic segment spans residues 1 to 65 (MVPSQEEPAA…GNQEPPEPPE (65 aa)). The chain crosses the membrane as a helical span at residues 66–86 (GGWGWLVMLAAMWCNGSVFGI). Residues 87–113 (QNAYGVLFVSMLETFGAKDDDNMAFKA) lie on the Extracellular side of the membrane. Residues 114-134 (AWVGSLSMGMIFFCCPIVSVF) form a helical membrane-spanning segment. The Cytoplasmic portion of the chain corresponds to 135 to 143 (TDMFGCRRT). Residues 144-164 (AVLGAAVGFVGLMSSSFVSSI) form a helical membrane-spanning segment. The Extracellular portion of the chain corresponds to 165–170 (EPLYFT). Residues 171 to 191 (YGVVFACGCSFAYQPSLVILG) traverse the membrane as a helical segment. At 192–199 (HYFKKRLG) the chain is on the cytoplasmic side. Residues 200–220 (LVNGIVTAGSSVFTILLPLLL) traverse the membrane as a helical segment. At 221–227 (GNLTSTV) the chain is on the extracellular side. Residues 228-248 (GLCYTLRILCIFMFVLFLAGF) form a helical membrane-spanning segment. Over 249 to 290 (TYRPLVPSSKEKESEDSRSSFFSRRKLSPPKKIFNFALFKET) the chain is Cytoplasmic. Residue Ser-262 is modified to Phosphoserine. Residues 291 to 311 (AYAVWAAGIPLALFGYFVPYV) form a helical membrane-spanning segment. The Extracellular segment spans residues 312–328 (HLMNHVKERFKDVNNKE). The chain crosses the membrane as a helical span at residues 329–349 (VLFMCIGVTSGVGRLLFGRIA). A topological domain (cytoplasmic) is located at residue Asp-350. Residues 351-371 (YLPGVKKVYLQVLSFFFIGLT) form a helical membrane-spanning segment. Over 372–395 (SMMIPLCSVFGALIALCLIMGLFD) the chain is Extracellular. Residues 396–416 (GCFISIMAPIAFELVGPQDAS) form a helical membrane-spanning segment. Topologically, residues 417-418 (QA) are cytoplasmic. Residues 419–439 (IGFLLGFMSIPMTVGPPVAGL) form a helical membrane-spanning segment. At 440–450 (LHDKLGSYDLA) the chain is on the extracellular side. A helical transmembrane segment spans residues 451–471 (FYLAGIPPFIGGAVLCLIPWI). Residues 472 to 514 (HSKKQREISKNTGGEKMEKMLANQSSLLSSSSGIFKKESDSII) lie on the Cytoplasmic side of the membrane. 4 positions are modified to phosphoserine: Ser-497, Ser-500, Ser-502, and Ser-503.

Belongs to the major facilitator superfamily. Monocarboxylate porter (TC 2.A.1.13) family. In terms of processing, not N-glycosylated. In terms of tissue distribution, strongly expressed in intestine, placenta and liver. In small intestine is detected in the basolateral membrane (at protein level).

The protein resides in the cell membrane. It is found in the basolateral cell membrane. It catalyses the reaction L-tryptophan(in) = L-tryptophan(out). The enzyme catalyses L-tyrosine(in) = L-tyrosine(out). The catalysed reaction is L-phenylalanine(in) = L-phenylalanine(out). It carries out the reaction 3,3',5-triiodo-L-thyronine(out) = 3,3',5-triiodo-L-thyronine(in). It catalyses the reaction L-thyroxine(out) = L-thyroxine(in). Its function is as follows. Sodium- and proton-independent thyroid hormones and aromatic acids transporter. Mediates both uptake and efflux of 3,5,3'-triiodothyronine (T3) and 3,5,3',5'-tetraiodothyronine (T4) with high affinity, suggesting a role in the homeostasis of thyroid hormone levels. Responsible for low affinity bidirectional transport of the aromatic amino acids, such as phenylalanine, tyrosine, tryptophan and L-3,4-dihydroxyphenylalanine (L-dopa). Plays an important role in homeostasis of aromatic amino acids. This is Monocarboxylate transporter 10 (Slc16a10) from Rattus norvegicus (Rat).